The following is a 377-amino-acid chain: MECADYGLTRKLERDNLNLNPLQRGGVLPAAARKALHEFGDGYSVCDYCDGRLDQVTRPAINCFLDDLADFTGSDAVRTVHGAREGKFAVMHALCERGDTVVVDGNAHYTTHLAAERNGLEIVEVPSTGHPSYEVTPEAYREVLEETIDRVEVKLAVLTHVDGNYGNLTDARGVADVCRKLGVPLLLNCAYSMGRLPVNLRELGVDFVVGSGHKSMAASGPIGVLGMKSEWEDTVLRRSGRHEKKELELLGCTSRGAPLATLMASLPYVRERVSRWDGEVKKTRYLVSELEDIGGIEQLGVRPKEHDLVRFETPVFHEIAASHPRKGFFLYEELKKRGIVGIRRGQTKWFKCSIYGMTEEQVQYVVDSFRDIVEENR.

Pyridoxal 5'-phosphate-binding positions include 83–84 (AR), N188, and 211–213 (SGH). K214 is subject to N6-(pyridoxal phosphate)lysine.

The protein belongs to the SepCysS family. Homodimer. Interacts with SepRS. Pyridoxal 5'-phosphate is required as a cofactor.

It carries out the reaction O-phospho-L-seryl-tRNA(Cys) + hydrogen sulfide + H(+) = L-cysteinyl-tRNA(Cys) + phosphate. Functionally, converts O-phospho-L-seryl-tRNA(Cys) (Sep-tRNA(Cys)) to L-cysteinyl-tRNA(Cys) (Cys-tRNA(Cys)). The chain is O-phospho-L-seryl-tRNA:Cys-tRNA synthase from Methanothermobacter thermautotrophicus (strain ATCC 29096 / DSM 1053 / JCM 10044 / NBRC 100330 / Delta H) (Methanobacterium thermoautotrophicum).